The primary structure comprises 329 residues: Taste receptor type 2 member 102 (329 aa).

The Extracellular portion of the chain corresponds to 1 to 9; sequence MNMESVLHN. The helical transmembrane segment at 10–30 threads the bilayer; it reads FATVLIYVEFIFGNLSNGFIV. The Cytoplasmic segment spans residues 31-47; that stretch reads LSNFLDWVIKQKLSLID. A helical membrane pass occupies residues 48-68; that stretch reads KILLTLAISRITLIWEIYAWF. Topologically, residues 69 to 85 are extracellular; that stretch reads KSLYDPSSFLIGIEFQI. A helical membrane pass occupies residues 86 to 108; that stretch reads IYFSWVLSSHFSLWLATTLSVFY. Residues 109-129 lie on the Cytoplasmic side of the membrane; the sequence is LLRIANCSWQIFLYLKWRLKQ. Residues 130–150 form a helical membrane-spanning segment; sequence LIVGMLLGSLVFLLGNLMQSM. At 151–181 the chain is on the extracellular side; it reads LEERFYQYGRNTSVNTMSNDLAMWTELIFFN. An N-linked (GlcNAc...) asparagine glycan is attached at asparagine 161. Residues 182–202 form a helical membrane-spanning segment; the sequence is MAMFSVIPFTLALISFLLLIF. The Cytoplasmic portion of the chain corresponds to 203–231; the sequence is SLWKHLQKMQLISRRHRDPSTKAHMNALR. A helical transmembrane segment spans residues 232–252; that stretch reads IMVSFLLLYTMHFLSLLISWI. Over 253 to 262 the chain is Extracellular; the sequence is AQKHQSELAD. The helical transmembrane segment at 263–283 threads the bilayer; the sequence is IIGMITELMYPSVHSCILILG. The Cytoplasmic segment spans residues 284-329; sequence NSKLKQTSLCMLRHLRCRLKGENITIAYSNQITSFCVFCVANKSMR.

The protein belongs to the G-protein coupled receptor T2R family.

Its subcellular location is the membrane. Its function is as follows. Putative taste receptor which may play a role in the perception of bitterness. In Mus musculus (Mouse), this protein is Taste receptor type 2 member 102.